A 651-amino-acid polypeptide reads, in one-letter code: Intraflagellar transport protein 70A (651 aa).

TPR repeat units follow at residues 8-41 (DGEYTATIYKLIKEARYGEAIQILSNELQKQYRS), 42-75 (RAGLSLLGYCYYQIQDFVNAADCYEQLIQITPEV), 140-173 (PESEINMGCLLYKEGHYEEACKKFITAMQVMGYK), 175-207 (DLSYNIALCYYSMKQYAPALKHIADIIERGIRE), 372-405 (LTEQMRKLTKQVQEARHNRDDEAVKKAVNEYDET), 410-443 (IPVLMAQAKIYWNMENYQMVEKIFRKSVEFCNEH), and 445-478 (IWKLNVAHVLFMQDNKYKEAIGFYEPIVKKHYDN). Residues 494–521 (YIMTSQNEEAEELMRKIEKEEEQIAYEN) are a coiled coil. One copy of the TPR 8 repeat lies at 530–563 (CIVNLVIGTLYCAKGNYEFGISRVIKSLEPYNKK).

This sequence belongs to the TTC30/dfy-1/fleer family.

The protein resides in the cell projection. Its subcellular location is the cilium. Functionally, required for polyglutamylation of axonemal tubulin. Plays a role in anterograde intraflagellar transport (IFT), the process by which cilia precursors are transported from the base of the cilium to the site of their incorporation at the tip. The polypeptide is Intraflagellar transport protein 70A (ift70a) (Xenopus tropicalis (Western clawed frog)).